The chain runs to 178 residues: Large ribosomal subunit protein uL10 (178 aa).

This sequence belongs to the universal ribosomal protein uL10 family. As to quaternary structure, part of the ribosomal stalk of the 50S ribosomal subunit. The N-terminus interacts with L11 and the large rRNA to form the base of the stalk. The C-terminus forms an elongated spine to which L12 dimers bind in a sequential fashion forming a multimeric L10(L12)X complex.

Its function is as follows. Forms part of the ribosomal stalk, playing a central role in the interaction of the ribosome with GTP-bound translation factors. The protein is Large ribosomal subunit protein uL10 of Thermosynechococcus vestitus (strain NIES-2133 / IAM M-273 / BP-1).